We begin with the raw amino-acid sequence, 970 residues long: Glycine dehydrogenase (decarboxylating) (970 aa).

K723 carries the post-translational modification N6-(pyridoxal phosphate)lysine.

It belongs to the GcvP family. The glycine cleavage system is composed of four proteins: P, T, L and H. Pyridoxal 5'-phosphate is required as a cofactor.

The enzyme catalyses N(6)-[(R)-lipoyl]-L-lysyl-[glycine-cleavage complex H protein] + glycine + H(+) = N(6)-[(R)-S(8)-aminomethyldihydrolipoyl]-L-lysyl-[glycine-cleavage complex H protein] + CO2. Its function is as follows. The glycine cleavage system catalyzes the degradation of glycine. The P protein binds the alpha-amino group of glycine through its pyridoxal phosphate cofactor; CO(2) is released and the remaining methylamine moiety is then transferred to the lipoamide cofactor of the H protein. This chain is Glycine dehydrogenase (decarboxylating), found in Burkholderia pseudomallei (strain 1106a).